A 515-amino-acid chain; its full sequence is Bifunctional purine biosynthesis protein PurH (515 aa).

One can recognise an MGS-like domain in the interval 1–145 (MTKRALISVS…KNHASVTVVV (145 aa)).

Belongs to the PurH family.

It carries out the reaction (6R)-10-formyltetrahydrofolate + 5-amino-1-(5-phospho-beta-D-ribosyl)imidazole-4-carboxamide = 5-formamido-1-(5-phospho-D-ribosyl)imidazole-4-carboxamide + (6S)-5,6,7,8-tetrahydrofolate. The enzyme catalyses IMP + H2O = 5-formamido-1-(5-phospho-D-ribosyl)imidazole-4-carboxamide. Its pathway is purine metabolism; IMP biosynthesis via de novo pathway; 5-formamido-1-(5-phospho-D-ribosyl)imidazole-4-carboxamide from 5-amino-1-(5-phospho-D-ribosyl)imidazole-4-carboxamide (10-formyl THF route): step 1/1. It participates in purine metabolism; IMP biosynthesis via de novo pathway; IMP from 5-formamido-1-(5-phospho-D-ribosyl)imidazole-4-carboxamide: step 1/1. The sequence is that of Bifunctional purine biosynthesis protein PurH from Streptococcus pyogenes serotype M3 (strain ATCC BAA-595 / MGAS315).